We begin with the raw amino-acid sequence, 124 residues long: Small ribosomal subunit protein uS12 (124 aa).

The residue at position 89 (aspartate 89) is a 3-methylthioaspartic acid.

The protein belongs to the universal ribosomal protein uS12 family. Part of the 30S ribosomal subunit. Contacts proteins S8 and S17. May interact with IF1 in the 30S initiation complex.

Functionally, with S4 and S5 plays an important role in translational accuracy. Interacts with and stabilizes bases of the 16S rRNA that are involved in tRNA selection in the A site and with the mRNA backbone. Located at the interface of the 30S and 50S subunits, it traverses the body of the 30S subunit contacting proteins on the other side and probably holding the rRNA structure together. The combined cluster of proteins S8, S12 and S17 appears to hold together the shoulder and platform of the 30S subunit. The polypeptide is Small ribosomal subunit protein uS12 (Treponema pallidum subsp. pallidum (strain SS14)).